A 299-amino-acid chain; its full sequence is Protease HtpX homolog (299 aa).

Helical transmembrane passes span 15–35 and 37–57; these read MFLTMFLLAALYLFFLAVLWQ and GVSYTGIIVFVAIMLGVQYYF. Residue His140 coordinates Zn(2+). Glu141 is an active-site residue. Residue His144 coordinates Zn(2+). Helical transmembrane passes span 158 to 178 and 187 to 207; these read FFATVASFIVQNFFYWGGAFG and NNIMLVYLASLVVWLVSYFLI. Residue Glu215 coordinates Zn(2+).

Belongs to the peptidase M48B family. The cofactor is Zn(2+).

The protein localises to the cell membrane. This Moorella thermoacetica (strain ATCC 39073 / JCM 9320) protein is Protease HtpX homolog.